The primary structure comprises 186 residues: Nuclear transcription factor Y subunit B-1 (186 aa).

The disordered stretch occupies residues 1–24 (MAGNKKRGGRNMDQVKKAAVRSDG). The DNA-binding element occupies 34–40 (LPMANLV). A subunit association domain (SAD) region spans residues 61–72 (THDCAVEFVGFV). The segment at 123–142 (GGNRRVAPPPPAAATPLTPG) is disordered.

The protein belongs to the NFYB/HAP3 subunit family. As to quaternary structure, heterotrimeric transcription factor composed of three components, NF-YA, NF-YB and NF-YC. NF-YB and NF-YC must interact and dimerize for NF-YA association and DNA binding. Interacts with MADS18. Forms a ternary complex with the MADS6-MADS18 heterodimer. As to expression, expressed in developing kernels.

The protein resides in the nucleus. Component of the NF-Y/HAP transcription factor complex. The NF-Y complex stimulates the transcription of various genes by recognizing and binding to a CCAAT motif in promoters. May act through association with MADS-box proteins. May regulate the expression of genes involved in flowering. The polypeptide is Nuclear transcription factor Y subunit B-1 (NFYB1) (Oryza sativa subsp. japonica (Rice)).